The following is a 622-amino-acid chain: 1-deoxy-D-xylulose-5-phosphate synthase (622 aa).

Thiamine diphosphate-binding positions include His80 and 121-123 (GHS). Asp152 provides a ligand contact to Mg(2+). Thiamine diphosphate contacts are provided by residues 153–154 (GA), Asn181, Tyr288, and Glu370. Asn181 contacts Mg(2+).

It belongs to the transketolase family. DXPS subfamily. In terms of assembly, homodimer. Requires Mg(2+) as cofactor. The cofactor is thiamine diphosphate.

It carries out the reaction D-glyceraldehyde 3-phosphate + pyruvate + H(+) = 1-deoxy-D-xylulose 5-phosphate + CO2. Its pathway is metabolic intermediate biosynthesis; 1-deoxy-D-xylulose 5-phosphate biosynthesis; 1-deoxy-D-xylulose 5-phosphate from D-glyceraldehyde 3-phosphate and pyruvate: step 1/1. Catalyzes the acyloin condensation reaction between C atoms 2 and 3 of pyruvate and glyceraldehyde 3-phosphate to yield 1-deoxy-D-xylulose-5-phosphate (DXP). The chain is 1-deoxy-D-xylulose-5-phosphate synthase from Hamiltonella defensa subsp. Acyrthosiphon pisum (strain 5AT).